The chain runs to 432 residues: Enolase (432 aa).

Q163 serves as a coordination point for (2R)-2-phosphoglycerate. E205 acts as the Proton donor in catalysis. 3 residues coordinate Mg(2+): D242, E285, and D312. (2R)-2-phosphoglycerate is bound by residues K337, R366, S367, and K388. The active-site Proton acceptor is the K337.

Belongs to the enolase family. It depends on Mg(2+) as a cofactor.

Its subcellular location is the cytoplasm. The protein resides in the secreted. It localises to the cell surface. The enzyme catalyses (2R)-2-phosphoglycerate = phosphoenolpyruvate + H2O. The protein operates within carbohydrate degradation; glycolysis; pyruvate from D-glyceraldehyde 3-phosphate: step 4/5. Catalyzes the reversible conversion of 2-phosphoglycerate (2-PG) into phosphoenolpyruvate (PEP). It is essential for the degradation of carbohydrates via glycolysis. This Bifidobacterium longum (strain DJO10A) protein is Enolase.